The following is a 214-amino-acid chain: Orotate phosphoribosyltransferase (214 aa).

Lys-26 is a 5-phospho-alpha-D-ribose 1-diphosphate binding site. An orotate-binding site is contributed by 34 to 35; the sequence is FF. 5-phospho-alpha-D-ribose 1-diphosphate is bound by residues 72-73, Arg-99, Lys-100, Lys-103, His-105, and 124-132; these read YK and DDVITAGTA. Orotate is bound by residues Thr-128 and Arg-156.

This sequence belongs to the purine/pyrimidine phosphoribosyltransferase family. PyrE subfamily. As to quaternary structure, homodimer. Mg(2+) serves as cofactor.

The enzyme catalyses orotidine 5'-phosphate + diphosphate = orotate + 5-phospho-alpha-D-ribose 1-diphosphate. Its pathway is pyrimidine metabolism; UMP biosynthesis via de novo pathway; UMP from orotate: step 1/2. Its function is as follows. Catalyzes the transfer of a ribosyl phosphate group from 5-phosphoribose 1-diphosphate to orotate, leading to the formation of orotidine monophosphate (OMP). The protein is Orotate phosphoribosyltransferase of Actinobacillus succinogenes (strain ATCC 55618 / DSM 22257 / CCUG 43843 / 130Z).